The primary structure comprises 883 residues: Aryl hydrocarbon receptor (883 aa).

Residues 1–9 (MSSGANITY) constitute a propeptide that is removed on maturation. The segment at 1–38 (MSSGANITYASRKRRKPVQKTVKPIPAEGIKSNPSKRH) is disordered. Short sequence motifs (nuclear localization signal) lie at residues 12–15 (RKRR) and 36–41 (KRHRDR). The bHLH domain occupies 26–79 (PAEGIKSNPSKRHRDRLNTELDRLASLLPFPQDVINKLDKLSVLRLSVSYLRAK). Residues 37–65 (RHRDRLNTELDRLASLLPFPQDVINKLDK) form a DNA-binding region. 3 required for maintaining the overall integrity of the AHR:ARNT heterodimer and its transcriptional activity regions span residues 49 to 81 (LASL…AKSF), 116 to 124 (LLQALNGFV), and 260 to 262 (FAI). Residues 63–71 (LDKLSVLRL) carry the Nuclear export signal motif. The PAS 1 domain maps to 111–175 (QEGEFLLQAL…AEFQRQLHWA (65 aa)). The 71-residue stretch at 266–336 (LQPPSILEIR…CAESHIRMIK (71 aa)) folds into the PAS 2 domain. The PAC domain maps to 342 to 383 (MTVFRLLAKHSRWRWVQSNARLIYRNGRPDYIIATQRPLTDE). The disordered stretch occupies residues 421 to 449 (LPIRTKSNTSRKDWAPQSTPSKDSFHPSS). Polar residues predominate over residues 436–449 (PQSTPSKDSFHPSS).

Homodimer. Heterodimer; efficient DNA binding requires dimerization with another bHLH protein. Interacts with ARNT; the heterodimer ARNT:AHR binds to core DNA sequence 5'-TGCGTG-3' within the dioxin response element (DRE) of target gene promoters and activates their transcription. Binds MYBBP1A. Interacts with coactivators including SRC-1, RIP140 and NOCA7, and with the corepressor SMRT. Interacts with NEDD8 and IVNS1ABP. Interacts with BMAL1. Interacts with HSP90AB1. Interacts with TIPARP; leading to mono-ADP-ribosylation of AHR and subsequent inhibition of AHR. Post-translationally, mono-ADP-ribosylated, leading to inhibit transcription activator activity of AHR.

The protein resides in the cytoplasm. Its subcellular location is the nucleus. Ligand-activated transcription factor that enables cells to adapt to changing conditions by sensing compounds from the environment, diet, microbiome and cellular metabolism, and which plays important roles in development, immunity and cancer. Upon ligand binding, translocates into the nucleus, where it heterodimerizes with ARNT and induces transcription by binding to xenobiotic response elements (XRE). Regulates a variety of biological processes, including angiogenesis, hematopoiesis, drug and lipid metabolism, cell motility and immune modulation. Xenobiotics can act as ligands: upon xenobiotic-binding, activates the expression of multiple phase I and II xenobiotic chemical metabolizing enzyme genes (such as the CYP1A1 gene). Mediates biochemical and toxic effects of halogenated aromatic hydrocarbons. Next to xenobiotics, natural ligands derived from plants, microbiota, and endogenous metabolism are potent AHR agonists. Tryptophan (Trp) derivatives constitute an important class of endogenous AHR ligands. Acts as a negative regulator of anti-tumor immunity: indoles and kynurenic acid generated by Trp catabolism act as ligand and activate AHR, thereby promoting AHR-driven cancer cell motility and suppressing adaptive immunity. Regulates the circadian clock by inhibiting the basal and circadian expression of the core circadian component PER1. Inhibits PER1 by repressing the CLOCK-BMAL1 heterodimer mediated transcriptional activation of PER1. The heterodimer ARNT:AHR binds to core DNA sequence 5'-TGCGTG-3' within the dioxin response element (DRE) of target gene promoters and activates their transcription. This chain is Aryl hydrocarbon receptor (Ahr), found in Mus musculus molossinus (Japanese house mouse).